Reading from the N-terminus, the 2210-residue chain is RNA-directed RNA polymerase L (2210 aa).

Residues 26–284 (RDIFLSQHHP…SHKDSDVPSC (259 aa)) are endonuclease. 3 residues coordinate Mn(2+): Glu-51, Asp-89, and Glu-102. Lys-115 is a catalytic residue. The RdRp catalytic domain occupies 1171-1368 (CDMKMAVNNG…FLSSKLNKFI (198 aa)). Residue Asp-1329 coordinates Mg(2+).

It belongs to the Bunyavirales RNA polymerase family. As to quaternary structure, homomultimer; the oligomeric structure is essential for the polymerase activity. Interacts with nucleoprotein N. Interacts with protein Z; this interaction inhibits viral transcription and replication, Z partially blocks the product exit tunnel for the releasing nascent RNA product. Mn(2+) is required as a cofactor. It depends on Mg(2+) as a cofactor.

Its subcellular location is the virion. The protein localises to the host cytoplasm. The catalysed reaction is RNA(n) + a ribonucleoside 5'-triphosphate = RNA(n+1) + diphosphate. RNA-dependent RNA polymerase, which is responsible for the replication and transcription of the viral RNA genome using antigenomic RNA as an intermediate. During transcription, synthesizes subgenomic RNAs and assures their capping by a cap-snatching mechanism, which involves the endonuclease activity cleaving the host capped pre-mRNAs. These short capped RNAs are then used as primers for viral transcription. The 3'-end of subgenomic mRNAs molecules are heterogeneous and not polyadenylated. The replicase function is to direct synthesis of antigenomic and genomic RNA which are encapsidated and non capped. As a consequence of the use of the same enzyme for both transcription and replication, these mechanisms need to be well coordinated. These processes may be regulated by proteins N and Z in a dose-dependent manner. Z protein inhibits the viral polymerase L und thus the viral transcription and RNA synthesis. This Junin mammarenavirus (JUNV) protein is RNA-directed RNA polymerase L.